A 79-amino-acid chain; its full sequence is Large ribosomal subunit protein eL38 (79 aa).

This sequence belongs to the eukaryotic ribosomal protein eL38 family.

In Theileria parva (East coast fever infection agent), this protein is Large ribosomal subunit protein eL38 (RPL38).